The sequence spans 337 residues: Glyceraldehyde-3-phosphate dehydrogenase (337 aa).

NAD(+) contacts are provided by residues 12–13 (RI), Asp34, and Lys79. Residues 150-152 (SCT), Thr181, 210-211 (TG), and Arg233 each bind D-glyceraldehyde 3-phosphate. Cys151 acts as the Nucleophile in catalysis. Asn315 serves as a coordination point for NAD(+).

The protein belongs to the glyceraldehyde-3-phosphate dehydrogenase family. Homotetramer.

The protein localises to the cytoplasm. It catalyses the reaction D-glyceraldehyde 3-phosphate + phosphate + NAD(+) = (2R)-3-phospho-glyceroyl phosphate + NADH + H(+). Its pathway is carbohydrate degradation; glycolysis; pyruvate from D-glyceraldehyde 3-phosphate: step 1/5. The protein is Glyceraldehyde-3-phosphate dehydrogenase (GPD1) of Cochliobolus heterostrophus (Southern corn leaf blight fungus).